The following is a 447-amino-acid chain: Probable ribosomal RNA small subunit methyltransferase B (447 aa).

S-adenosyl-L-methionine contacts are provided by residues 259 to 265, Asp-283, Asp-310, and Asp-329; that span reads CAAPGGK. The active-site Nucleophile is Cys-382.

Belongs to the class I-like SAM-binding methyltransferase superfamily. RsmB/NOP family.

The protein localises to the cytoplasm. It carries out the reaction cytidine(967) in 16S rRNA + S-adenosyl-L-methionine = 5-methylcytidine(967) in 16S rRNA + S-adenosyl-L-homocysteine + H(+). Specifically methylates the cytosine at position 967 (m5C967) of 16S rRNA. The polypeptide is Probable ribosomal RNA small subunit methyltransferase B (Bacillus subtilis (strain 168)).